The chain runs to 209 residues: Large ribosomal subunit protein uL3 (209 aa).

Belongs to the universal ribosomal protein uL3 family. Part of the 50S ribosomal subunit. Forms a cluster with proteins L14 and L19.

Its function is as follows. One of the primary rRNA binding proteins, it binds directly near the 3'-end of the 23S rRNA, where it nucleates assembly of the 50S subunit. In Nitratidesulfovibrio vulgaris (strain DSM 19637 / Miyazaki F) (Desulfovibrio vulgaris), this protein is Large ribosomal subunit protein uL3.